Here is a 1493-residue protein sequence, read N- to C-terminus: Mitogen-activated protein kinase kinase kinase 1 (1493 aa).

Over residues Met-1 to Glu-23 the composition is skewed to low complexity. Disordered regions lie at residues Met-1–Arg-178 and His-194–Ser-300. An N-acetylalanine modification is found at Ala-2. Phosphoserine is present on Ser-21. Positions Ala-24–Gln-35 are enriched in gly residues. The segment covering Gly-36–Gly-46 has biased composition (low complexity). A compositionally biased stretch (pro residues) spans Pro-89 to Glu-99. A compositionally biased stretch (low complexity) spans Ala-140–Gly-156. Ser-142 carries the phosphoserine modification. The segment covering Arg-157–Arg-178 has biased composition (basic and acidic residues). Low complexity predominate over residues Ser-235 to Ser-256. Phosphoserine is present on Ser-270. At Thr-280 the chain carries Phosphothreonine. 3 positions are modified to phosphoserine: Ser-287, Ser-292, and Ser-295. The segment at Tyr-333–Phe-361 adopts an SWIM-type zinc-finger fold. A compositionally biased stretch (low complexity) spans Ser-411–Asn-428. Residues Ser-411 to Lys-431 are disordered. The RING-type zinc finger occupies Cys-438–Arg-487. Phosphoserine occurs at positions 502 and 526. 2 disordered regions span residues Ser-506–Gln-531 and Glu-895–Ala-914. The span at Ala-512 to Gln-527 shows a compositional bias: low complexity. Ser-915 carries the phosphoserine modification. Disordered regions lie at residues Ser-927–Ser-957 and Pro-992–Leu-1066. Over residues Ala-998 to Asn-1013 the composition is skewed to polar residues. Residues Ser-999 and Ser-1024 each carry the phosphoserine modification. The span at Gly-1049–Thr-1063 shows a compositional bias: polar residues. The 266-residue stretch at Trp-1224–Phe-1489 folds into the Protein kinase domain. ATP is bound by residues Ile-1230–Cys-1238 and Lys-1253. Asp-1350 functions as the Proton acceptor in the catalytic mechanism. 2 positions are modified to phosphothreonine; by autocatalysis: Thr-1381 and Thr-1393.

It belongs to the protein kinase superfamily. STE Ser/Thr protein kinase family. MAP kinase kinase kinase subfamily. In terms of assembly, binds both upstream activators and downstream substrates in multimolecular complexes through its N-terminus. Oligomerizes after binding MAP4K2 or TRAF2. Interacts with AXIN1. Interacts (via the kinase catalytic domain) with STK38. Interacts with GRIPAP1. The cofactor is Mg(2+). In terms of processing, autophosphorylated. Highly expressed in the heart and spleen while a lower level expression is seen in the liver.

It catalyses the reaction L-seryl-[protein] + ATP = O-phospho-L-seryl-[protein] + ADP + H(+). The catalysed reaction is L-threonyl-[protein] + ATP = O-phospho-L-threonyl-[protein] + ADP + H(+). Its activity is regulated as follows. Activated by autophosphorylation on Thr-1381 and Thr-1393 following oligomerization. Functionally, component of a protein kinase signal transduction cascade. Activates the ERK and JNK kinase pathways by phosphorylation of MAP2K1 and MAP2K4. May phosphorylate the MAPK8/JNK1 kinase. Activates CHUK and IKBKB, the central protein kinases of the NF-kappa-B pathway. This chain is Mitogen-activated protein kinase kinase kinase 1 (Map3k1), found in Mus musculus (Mouse).